The primary structure comprises 141 residues: Small ribosomal subunit protein uS12 (141 aa).

The protein belongs to the universal ribosomal protein uS12 family. Part of the 30S ribosomal subunit.

Its function is as follows. With S4 and S5 plays an important role in translational accuracy. Located at the interface of the 30S and 50S subunits. The sequence is that of Small ribosomal subunit protein uS12 from Methanothermobacter thermautotrophicus (strain ATCC 29096 / DSM 1053 / JCM 10044 / NBRC 100330 / Delta H) (Methanobacterium thermoautotrophicum).